We begin with the raw amino-acid sequence, 651 residues long: Probable ATP-dependent helicase MJ0942 (651 aa).

In terms of domain architecture, Helicase ATP-binding spans 6 to 255; sequence YIKEKFPYPK…EIIEKYLTSR (250 aa). 41 to 48 lines the ATP pocket; the sequence is APTGVGKT. The [4Fe-4S] cluster site is built by C102, C149, and C154. A DEAH box motif is present at residues 195 to 198; that stretch reads DEAH. The region spanning 449–638 is the Helicase C-terminal domain; that stretch reads NLLKILEAIN…NYEVMSLDMA (190 aa).

The protein belongs to the helicase family. DinG subfamily. [4Fe-4S] cluster is required as a cofactor.

It catalyses the reaction Couples ATP hydrolysis with the unwinding of duplex DNA at the replication fork by translocating in the 5'-3' direction. This creates two antiparallel DNA single strands (ssDNA). The leading ssDNA polymer is the template for DNA polymerase III holoenzyme which synthesizes a continuous strand.. The catalysed reaction is ATP + H2O = ADP + phosphate + H(+). Functionally, might be a 5'-3' DNA helicase. This Methanocaldococcus jannaschii (strain ATCC 43067 / DSM 2661 / JAL-1 / JCM 10045 / NBRC 100440) (Methanococcus jannaschii) protein is Probable ATP-dependent helicase MJ0942.